The sequence spans 437 residues: Serine hydroxymethyltransferase (437 aa).

(6S)-5,6,7,8-tetrahydrofolate-binding positions include leucine 130 and 134-136 (GHL). Lysine 239 carries the post-translational modification N6-(pyridoxal phosphate)lysine.

It belongs to the SHMT family. In terms of assembly, homodimer. It depends on pyridoxal 5'-phosphate as a cofactor.

It localises to the cytoplasm. It carries out the reaction (6R)-5,10-methylene-5,6,7,8-tetrahydrofolate + glycine + H2O = (6S)-5,6,7,8-tetrahydrofolate + L-serine. It participates in one-carbon metabolism; tetrahydrofolate interconversion. It functions in the pathway amino-acid biosynthesis; glycine biosynthesis; glycine from L-serine: step 1/1. In terms of biological role, catalyzes the reversible interconversion of serine and glycine with tetrahydrofolate (THF) serving as the one-carbon carrier. This reaction serves as the major source of one-carbon groups required for the biosynthesis of purines, thymidylate, methionine, and other important biomolecules. Also exhibits THF-independent aldolase activity toward beta-hydroxyamino acids, producing glycine and aldehydes, via a retro-aldol mechanism. This Bartonella tribocorum (strain CIP 105476 / IBS 506) protein is Serine hydroxymethyltransferase.